The chain runs to 172 residues: Galectin-related protein (172 aa).

Alanine 2 carries the N-acetylalanine modification. Phosphoserine occurs at positions 22 and 25. One can recognise a Galectin domain in the interval proline 39–isoleucine 168.

Monomer.

Does not bind lactose, and may not bind carbohydrates. The chain is Galectin-related protein (Lgalsl) from Mus musculus (Mouse).